The primary structure comprises 409 residues: Transforming growth factor beta regulator 1 (409 aa).

The span at 1-13 (MNHSPATTFSPHS) shows a compositional bias: polar residues. 2 disordered regions span residues 1–31 (MNHSPATTFSPHSRYQELKVRNKKSTKKSHK) and 127–162 (GGSCKKVKKDKREKGKENKSEAMKKPSKKKRVTEGT). Basic residues predominate over residues 21 to 31 (RNKKSTKKSHK). Basic and acidic residues predominate over residues 136 to 150 (DKREKGKENKSEAMK). One can recognise an FYR N-terminal domain in the interval 179-238 (VFPIVLEGLTVYSLGEIISDRAGFHEKVAIYPVGFCSTRVYVGMKNPDQKCLYTCQIKDG). Residues 239–318 (GTGPQFEIVP…RKCTGYQWVK (80 aa)) enclose the FYR C-terminal domain.

This sequence belongs to the TBRG1 family.

The protein resides in the nucleus. In terms of biological role, may act as a growth inhibitor. May be involved in maintaining chromosomal stability. The sequence is that of Transforming growth factor beta regulator 1 (tbrg1) from Xenopus tropicalis (Western clawed frog).